The sequence spans 661 residues: ATP-dependent RNA helicase vasa (661 aa).

Acidic residues predominate over residues 1–10 (MSDDWDDEPI). Residues 1-186 (MSDDWDDEPI…RRRRNEDDIN (186 aa)) are disordered. Serine 22 is modified (phosphoserine). Threonine 27 is subject to Phosphothreonine. Gly residues-rich tracts occupy residues 38–52 (DGVGGSGGEGGGYQG) and 60–83 (RIGGGRGGGAGGYRGGNRDGGGFH). Basic and acidic residues predominate over residues 85–95 (GRREGERDFRG). Tandem repeats lie at residues 93–99 (FRGGEGG), 100–106 (FRGGQGG), 107–113 (SRGGQGG), 114–120 (SRGGQGG), and 121–127 (FRGGEGG). The 5 X 7 AA tandem repeats of [FS]-R-G-G-[EQ]-G-G stretch occupies residues 93–127 (FRGGEGGFRGGQGGSRGGQGGSRGGQGGFRGGEGG). Positions 96–129 (GEGGFRGGQGGSRGGQGGSRGGQGGFRGGEGGFR) are enriched in gly residues. A compositionally biased stretch (basic and acidic residues) spans 131 to 172 (RLYENEDGDERRGRLDREERGGERRGRLDREERGGERGERGD). The B30.2/SPRY domain-binding motif signature appears at 184 to 188 (DINNN). The interval 184–203 (DINNNNNIVEDVERKREFYI) is required for posterior localization in oocyte. Residues 245-273 (QHFTSADLRDIIIDNVNKSGYKIPTPIQK) carry the Q motif motif. The 178-residue stretch at 276 to 453 (IPVISSGRDL…GEFLKNYVFV (178 aa)) folds into the Helicase ATP-binding domain. 289–296 (AQTGSGKT) is an ATP binding site. The DEAD box motif lies at 399–402 (DEAD). The Helicase C-terminal domain occupies 477-624 (KRSKLIEILS…TVPDFLRTCG (148 aa)).

The protein belongs to the DEAD box helicase family. DDX4/VASA subfamily. In terms of assembly, interacts with eIF5B and faf. Interacts with gus (via B30.2/SPRY domain) and Fsn (via B30.2/SPRY domain). Interacts with aub, me31B, eIF-4a and TER94. Interacts with piwi; this interaction is RNA independent. Interacts with Dcr-1 and Fmr1; these interactions occur in the polar granules. Requires Mg(2+) as cofactor. Ubiquitinated during oogenesis. Deubiquitinated by faf, which protects this protein from proteasome-mediated degradation. As to expression, abundantly expressed in the female germline. Gus and faf are required for vas expression in the posterior pole of the oocyte.

It localises to the cytoplasm. The protein localises to the perinuclear region. The protein resides in the cytoplasmic ribonucleoprotein granule. The catalysed reaction is ATP + H2O = ADP + phosphate + H(+). Functionally, involved in translational control mechanisms operating in early stages of oogenesis. Required maternally in many stages of oogenesis, including cystocyte differentiation, oocyte differentiation, and specification of anterior-posterior polarity in the developing cysts. Essential for the formation and/or structural integrity of perinuclear nuage particles during germ cell formation. Required for gus, Fsn and aub accumulation at the posterior pole of the embryo. Required for the localization of vas to the perinuclear region of nurse cells. May have a role in production of piwi-interacting RNA (piRNA). This chain is ATP-dependent RNA helicase vasa, found in Drosophila melanogaster (Fruit fly).